The primary structure comprises 185 residues: ATP-dependent protease subunit HslV (185 aa).

Residue Thr2 is part of the active site. Residues Gly157, Cys160, and Thr163 each coordinate Na(+).

The protein belongs to the peptidase T1B family. HslV subfamily. In terms of assembly, a double ring-shaped homohexamer of HslV is capped on each side by a ring-shaped HslU homohexamer. The assembly of the HslU/HslV complex is dependent on binding of ATP.

It localises to the cytoplasm. It carries out the reaction ATP-dependent cleavage of peptide bonds with broad specificity.. With respect to regulation, allosterically activated by HslU binding. In terms of biological role, protease subunit of a proteasome-like degradation complex believed to be a general protein degrading machinery. The chain is ATP-dependent protease subunit HslV from Vibrio cholerae serotype O1 (strain ATCC 39315 / El Tor Inaba N16961).